The sequence spans 151 residues: Large-conductance mechanosensitive channel (151 aa).

Helical transmembrane passes span 12-32 and 71-91; these read GNIV…ALVT and VLLS…FLVV. The segment at 122-151 is disordered; that stretch reads AQTNGDSPGRHGGRGTPSPTDGPLASTESQ.

This sequence belongs to the MscL family. Homopentamer.

The protein resides in the cell membrane. In terms of biological role, channel that opens in response to stretch forces in the membrane lipid bilayer. May participate in the regulation of osmotic pressure changes within the cell. The protein is Large-conductance mechanosensitive channel of Mycobacterium bovis (strain BCG / Pasteur 1173P2).